Consider the following 473-residue polypeptide: Histidinol dehydrogenase, chloroplastic (473 aa).

The tract at residues 1–28 (MSLRPGRAHPLAASPLHTPLPARPRPQL) is disordered. 3 residues coordinate NAD(+): Tyr-162, Gln-224, and Asn-247. The substrate site is built by Ser-273, Gln-295, and His-298. Residues Gln-295 and His-298 each coordinate Zn(2+). Catalysis depends on proton acceptor residues Glu-363 and His-364. Positions 364, 397, 451, and 456 each coordinate substrate. Position 397 (Asp-397) interacts with Zn(2+). A Zn(2+)-binding site is contributed by His-456.

The protein belongs to the histidinol dehydrogenase family. The cofactor is Zn(2+).

The protein localises to the plastid. Its subcellular location is the chloroplast. The catalysed reaction is L-histidinol + 2 NAD(+) + H2O = L-histidine + 2 NADH + 3 H(+). Its pathway is amino-acid biosynthesis; L-histidine biosynthesis; L-histidine from 5-phospho-alpha-D-ribose 1-diphosphate: step 9/9. Its function is as follows. Catalyzes the sequential NAD-dependent oxidations of L-histidinol to L-histidinaldehyde and then to L-histidine. In Oryza sativa subsp. japonica (Rice), this protein is Histidinol dehydrogenase, chloroplastic (HDH).